Reading from the N-terminus, the 201-residue chain is Retinol-binding protein 4 (201 aa).

Positions 1–18 (MEWVWALVLLAALGGGSA) are cleaved as a signal peptide. 3 disulfides stabilise this stretch: Cys-22–Cys-178, Cys-88–Cys-192, and Cys-138–Cys-147. Residue Gln-116 coordinates substrate. Arg-139 is subject to Omega-N-methylarginine.

Belongs to the calycin superfamily. Lipocalin family. As to quaternary structure, interacts with TTR. Interaction with TTR prevents its loss by filtration through the kidney glomeruli. Interacts with STRA6.

The protein resides in the secreted. Retinol-binding protein that mediates retinol transport in blood plasma. Delivers retinol from the liver stores to the peripheral tissues. Transfers the bound all-trans retinol to STRA6, that then facilitates retinol transport across the cell membrane. This Mus musculus (Mouse) protein is Retinol-binding protein 4 (Rbp4).